The sequence spans 546 residues: Calcitonin receptor-like protein 1 (546 aa).

Over 1–171 (MADATSPFNV…EVARNARKLE (171 aa)) the chain is Cytoplasmic. Residues 172-192 (FVGLGLSLVSLILAISIFSYF) form a helical membrane-spanning segment. The Extracellular portion of the chain corresponds to 193–205 (RRLRVFRNLLHLH). Residues 206-226 (LMIAMLMVVILRLVLYIDLIF) traverse the membrane as a helical segment. Residues 227-251 (TGENGPHTNSAEGKTINTMPIVCEG) lie on the Cytoplasmic side of the membrane. A helical membrane pass occupies residues 252-272 (MFFFLEYFKTVTFCWMFLEGI). The Extracellular segment spans residues 273–292 (YLNNQIVFGFFNSEPKLLPY). The chain crosses the membrane as a helical span at residues 293 to 313 (FIAGYGIPLVHTMLWLLVVLI). The Cytoplasmic segment spans residues 314–333 (KKDFKVERCLGSYYLEPEFW). Residues 334-354 (ILDGPRMAELVINLFFICNVI) traverse the membrane as a helical segment. Residues 355–377 (RVLYSKVRESNNTSEAGLKKSVK) lie on the Extracellular side of the membrane. N-linked (GlcNAc...) asparagine glycosylation is found at N365 and N366. A helical membrane pass occupies residues 378–398 (AAMMLLPLLGVPNIMQTIPFA). Over 399-403 (PTRDN) the chain is Cytoplasmic. The chain crosses the membrane as a helical span at residues 404–424 (IMVFAVWTYTASFTYMYQGLM). At 425-546 (VASIYCFTNK…EGSNRSTKSP (122 aa)) the chain is on the extracellular side. N-linked (GlcNAc...) asparagine glycosylation is found at N472 and N476. The segment at 472 to 546 (NGTANASAPQ…EGSNRSTKSP (75 aa)) is disordered. The span at 473–485 (GTANASAPQTNNA) shows a compositional bias: polar residues. Residues 500-520 (KGSDDSTTKLMKDAVMEEEKN) show a composition bias toward basic and acidic residues. N-linked (GlcNAc...) asparagine glycosylation occurs at N540.

The protein belongs to the G-protein coupled receptor 2 family. As to expression, expression was observed in the mechanosensory neuron pairs PLM, ALM, FLP, OLQD, and OLQV, the chemosensory neurons PHA, PHB, RMEV, the ring motor neurons RMED, and the pharyngeal interneuron pair I1. Expression in sensory neurons PHA, PQR and URY are responsible for mate searching behavior. Expressed in AIY, RIM, RIA, and other neurons.

It is found in the cell membrane. In terms of biological role, G-protein coupled receptor for PDF neuropeptides. Plays a role in responses to environmental signals, including chemicals and touch, and in modulating locomotory behaviors. Capable of transducing signals via an adenylate cyclase acy-1 cAMP-dependent pathway. Required to regulate the sex-specific expression of TGFbeta-like daf-7 in the ASJ chemosensory neurons, perhaps acting via acy-1. Involved in modulating mate searching behavior independent of nutritional status. In the presence of food, plays a role in initiating and extending exploratory roaming behavior, perhaps acting in AIY, RIM, RIA, and other neurons, in opposition to 5-hydroxytryptamine (serotonin) signaling. Involved in mediating arousal from the sleep-like state called lethargus, which occurs during molting between larval and adult stages, in part by regulating touch sensitivity. May play a role in circadian rhythms of locomotor activity. G-protein coupled receptor which is activated by neuropeptides PDF-1 and PDF-2. Probably acts through the G-alpha(s) type of G proteins to elevate cAMP levels. Its function is as follows. G-protein coupled receptor which is activated by neuropeptides PDF-1 and PDF-2; however, activation is lower compared to isoforms a and b. Probably inhibits cAMP levels through the G-alpha(i/o) type of G proteins. This chain is Calcitonin receptor-like protein 1 (pdfr-1), found in Caenorhabditis elegans.